The sequence spans 324 residues: tRNA dimethylallyltransferase (324 aa).

17-24 (GPTASGKT) serves as a coordination point for ATP. 19 to 24 (TASGKT) provides a ligand contact to substrate. 4 interaction with substrate tRNA regions span residues 42-45 (DSAL), 166-170 (QRIQR), 251-256 (RCVGYR), and 284-291 (KRQITWLR).

It belongs to the IPP transferase family. As to quaternary structure, monomer. It depends on Mg(2+) as a cofactor.

It catalyses the reaction adenosine(37) in tRNA + dimethylallyl diphosphate = N(6)-dimethylallyladenosine(37) in tRNA + diphosphate. Catalyzes the transfer of a dimethylallyl group onto the adenine at position 37 in tRNAs that read codons beginning with uridine, leading to the formation of N6-(dimethylallyl)adenosine (i(6)A). The polypeptide is tRNA dimethylallyltransferase (Burkholderia orbicola (strain MC0-3)).